Here is a 444-residue protein sequence, read N- to C-terminus: E3 ubiquitin-protein ligase RNFT2 (444 aa).

The Extracellular segment spans residues 1–181 (MWLFTVNQVL…ILLAKLCFQH (181 aa)). Disordered regions lie at residues 13–41 (MQRR…ASVD) and 92–149 (PASR…PGTP). The span at 107 to 121 (YHHRQPHHHFHHGGH) shows a compositional bias: basic residues. Basic and acidic residues predominate over residues 131 to 140 (GGDHRGHSEE). The chain crosses the membrane as a helical span at residues 182-202 (KLGIAVCIGMASTFAYANSTL). At 203-214 (REQVSLKEKRSV) the chain is on the cytoplasmic side. A helical membrane pass occupies residues 215–235 (LVILWILAFLAGNTLYVLYTF). Residues 236-255 (SSQQLYNSLIFLKPNLEMLD) lie on the Extracellular side of the membrane. A helical membrane pass occupies residues 256–276 (FFDLLWIVGIADFVLKYITIA). Residues 277–329 (LKCLIVALPKIILAVKSKGKFYLVIEELSQLFRSLVPIQLWYKYIMGDDSSNS) lie on the Cytoplasmic side of the membrane. The helical transmembrane segment at 330–350 (YFLGGVLIVLYSLCKSFDICG) threads the bilayer. The Extracellular portion of the chain corresponds to 351 to 444 (RVGGVRKALK…GATSAHFQVY (94 aa)). An RING-type zinc finger spans residues 384–422 (CAICQAEFREPLILLCQHVFCEECLCLWLDRERTCPLCR).

It is found in the membrane. Its function is as follows. E3 ubiquitin-protein ligase that negatively regulates IL3-dependent cellular responses through IL3RA ubiquitination and degradation by the proteasome, having an anti-inflammatory effect. The chain is E3 ubiquitin-protein ligase RNFT2 from Homo sapiens (Human).